Reading from the N-terminus, the 290-residue chain is TIP41-like protein (290 aa).

The protein belongs to the TIP41 family. In terms of assembly, interacts with TAP46. Widely expressed.

In terms of biological role, may be involved in the regulation of the TOR signaling pathway. Indirectly activates the PP2A phosphatase via interaction with its suppressor TAP46. Could play a role in cytoskeleton functions. The sequence is that of TIP41-like protein from Arabidopsis thaliana (Mouse-ear cress).